The primary structure comprises 184 residues: Putative serine carboxypeptidase-like 52 (184 aa).

The N-terminal stretch at 1–22 is a signal peptide; that stretch reads MRTFSPKLLLLLLLVLRHHAES. An N-linked (GlcNAc...) asparagine glycan is attached at asparagine 93.

This sequence belongs to the peptidase S10 family.

The protein localises to the secreted. The polypeptide is Putative serine carboxypeptidase-like 52 (SCPL52) (Arabidopsis thaliana (Mouse-ear cress)).